We begin with the raw amino-acid sequence, 329 residues long: 2-oxoglutarate-dependent dioxygenase htyE (329 aa).

A Fe2OG dioxygenase domain is found at 175-289; that stretch reads NTSELRLLHY…RYSVAYFGKP (115 aa). Residues H201, D203, and H261 each contribute to the Fe cation site. R280 serves as a coordination point for 2-oxoglutarate.

Belongs to the iron/ascorbate-dependent oxidoreductase family. Fe(2+) is required as a cofactor.

It participates in antifungal biosynthesis. In terms of biological role, 2-oxoglutarate-dependent dioxygenase; part of the gene cluster that mediates the de novo generation of L-homotyrosine from acetyl-CoA and 4-hydroxyphenyl-pyruvate. L-homotyrosine is a building block of echinocandin B, a fungal lipidated cyclic hexapeptide that acts as an antifungal agent. L-homotyrosine 4-hydroxyphenyl-pyruvate first undergoes an aldol-type condensation by htyA with the C-2 of acetyl-CoA followed by the release of CoA to form 2-(4-hydroxybenzyl)-malate. This is followed by isomerization of 2-(4-hydroxy-benzyl)-malate to 3-(4-hydroxybenzyl)-malate by htyD. Thereafter, 3-(4-hydroxybenzyl)-malate undergoes decarboxylation and oxidation to form 2-oxo-4-(4-hydroxybenzyl)butanoic acid, coupled to reduction of NAD(+) to NADH by htyC. The product then undergoes transamination catalyzed by htyB to form L-homotyrosine. The protein is 2-oxoglutarate-dependent dioxygenase htyE of Aspergillus rugulosus (Emericella rugulosa).